Consider the following 537-residue polypeptide: MDYQDDGLGEMIEFLEDKLYYTSLSQPPKAELYPHMHFFTIDDELIYNPFYHDFGPLNVSHLIRFAVIVHGIMGKHRQAKKSKAIVLYSSTDTRLRANAACLLACYMVLVQNWPPHLALAPLAQAEPPFLGFRDAGYAVSDYYITIQDCVYGLWRARESSILNIRNIDVHDYETYERVENGDFNWISPKFIAFASPIQAGWNHASTRPKKLPQPFAIVLDYFVANKVKLIVRLNGPLYDKKTFENVGIRHKEMYFEDGTVPELSLVKEFIDLTEEVEEDGVIAVHCKAGLGRTGCLIGAYLIYKHCFTANEVIAYMRIMRPGMVVGPQQHWLHINQVHFRAYFYEKAMGRAIQQATAAEPLATPPRHPLNATNGTSQSNISTPLPEPTPGQPRKVSGHNPPSARRLPSASSVKFNEKLKNASKQSIQNENKASYSSYEDSEIQNDDETRTVGTPTETISVVRLRRSSSQSNIEPNGVRSPTSSPTGSPIRRTSGNRWSSGSSHSKKSAQRSVSMSSLNNTSNGRVAKPKPSKSRLIS.

Residues 182 to 345 (DFNWISPKFI…QVHFRAYFYE (164 aa)) enclose the Tyrosine-protein phosphatase domain. Residue Cys286 is the Phosphocysteine intermediate of the active site. Residues 359–537 (EPLATPPRHP…PKPSKSRLIS (179 aa)) form a disordered region. A compositionally biased stretch (polar residues) spans 370-382 (NATNGTSQSNIST). Positions 400–411 (PPSARRLPSASS) are enriched in low complexity. Positions 421–437 (ASKQSIQNENKASYSSY) are enriched in polar residues. At Thr453 the chain carries Phosphothreonine. Ser468 and Ser470 each carry phosphoserine. Residues 490–502 (RRTSGNRWSSGSS) show a composition bias toward low complexity. Position 513 is a phosphoserine (Ser513). Over residues 514 to 523 (MSSLNNTSNG) the composition is skewed to polar residues. The segment covering 526-537 (AKPKPSKSRLIS) has biased composition (basic residues).

The protein belongs to the protein-tyrosine phosphatase family. Non-receptor class CDC14 subfamily. Interacts with ark1 at the kinetochores. Interacts with bir1, cdc25, mid1, nbl1, pic1, and rad24. Phosphorylated by cds1, chk1, pmk1, and cdc2 upon Hydroxylurea and H(2)O(2) stress treatment. Phosphorylation regulates the nucleolar-to-nucleoplasmic transition. Is able to autodephosphorylate.

The protein localises to the nucleus. Its subcellular location is the nucleolus. It localises to the cytoplasm. The protein resides in the cytoskeleton. It is found in the microtubule organizing center. The protein localises to the spindle pole body. It catalyses the reaction O-phospho-L-tyrosyl-[protein] + H2O = L-tyrosyl-[protein] + phosphate. Functionally, protein phosphatase which antagonizes mitotic cyclin-dependent kinase cdc2, the inactivation of which is essential for exit from mitosis. To access its substrates, is released from nucleolar sequestration during mitosis. Plays an essential in coordinating the nuclear division cycle with cytokinesis through the cytokinesis checkpoint. Involved in chromosome segregation, where it is required for meiosis I spindle dissambly as well as for establishing two consecutive chromosome segregation phases. Allows damaged actomyosin rings to be maintained to facilitate completion of cell division in response to minor perturbation of the cell division machinery. Dephosphorylates the mitotic inducer cdc25 for its rapid degradation. Down-regulation of cdc25 activity ensures a prompt inactivation of mitotic cdc2 complexes to trigger cell division. Also dephosphorylates cdc2-phosphorylated nsk1, allowing nsk1-binding to kinetochores and spindle. Dephosphorylates ase1, which is essential for spindle midzone assembly and for continuous extension of the anaphase spindle. Tethered to the contractile ring by mid1, where it dephosphorylates cdc15. The chain is Tyrosine-protein phosphatase CDC14 homolog (clp1) from Schizosaccharomyces pombe (strain 972 / ATCC 24843) (Fission yeast).